Consider the following 136-residue polypeptide: UPF0102 protein BBta_0181 (136 aa).

Belongs to the UPF0102 family.

This Bradyrhizobium sp. (strain BTAi1 / ATCC BAA-1182) protein is UPF0102 protein BBta_0181.